We begin with the raw amino-acid sequence, 238 residues long: Ion-translocating oxidoreductase complex subunit E (238 aa).

6 helical membrane passes run 20-40 (ALVQ…VVNA), 41-61 (LGLG…VSLI), 72-92 (PAFV…MKAF), 95-115 (ELYQ…AVLG), 130-150 (AVDG…VGAV), and 185-205 (NVIF…LIAA).

It belongs to the NqrDE/RnfAE family. The complex is composed of six subunits: RnfA, RnfB, RnfC, RnfD, RnfE and RnfG.

Its subcellular location is the cell inner membrane. Functionally, part of a membrane-bound complex that couples electron transfer with translocation of ions across the membrane. This is Ion-translocating oxidoreductase complex subunit E from Cellvibrio japonicus (strain Ueda107) (Pseudomonas fluorescens subsp. cellulosa).